Reading from the N-terminus, the 240-residue chain is Proteasome subunit beta type-1 (240 aa).

Residue methionine 1 is modified to N-acetylmethionine. Residues 1-27 (MLSTAAYRDPDRELVMGPQGSAGPVQM) constitute a propeptide that is removed on maturation. A glycan (O-linked (GlcNAc) serine) is linked at serine 57. A phosphoserine mark is found at serine 61 and serine 67. Position 149 is a phosphotyrosine (tyrosine 149). At serine 161 the chain carries Phosphoserine. The residue at position 203 (lysine 203) is an N6-acetyllysine. Serine 208 carries an O-linked (GlcNAc) serine glycan.

It belongs to the peptidase T1B family. The 26S proteasome consists of a 20S proteasome core and two 19S regulatory subunits. The 20S proteasome core is a barrel-shaped complex made of 28 subunits that are arranged in four stacked rings. The two outer rings are each formed by seven alpha subunits, and the two inner rings are formed by seven beta subunits. The proteolytic activity is exerted by three beta-subunits PSMB5, PSMB6 and PSMB7. Interacts with SERPINB2. Interacts with RFPL4A. Ubiquitous.

The protein resides in the cytoplasm. It localises to the nucleus. Its function is as follows. Non-catalytic component of the 20S core proteasome complex involved in the proteolytic degradation of most intracellular proteins. This complex plays numerous essential roles within the cell by associating with different regulatory particles. Associated with two 19S regulatory particles, forms the 26S proteasome and thus participates in the ATP-dependent degradation of ubiquitinated proteins. The 26S proteasome plays a key role in the maintenance of protein homeostasis by removing misfolded or damaged proteins that could impair cellular functions, and by removing proteins whose functions are no longer required. Associated with the PA200 or PA28, the 20S proteasome mediates ubiquitin-independent protein degradation. This type of proteolysis is required in several pathways including spermatogenesis (20S-PA200 complex) or generation of a subset of MHC class I-presented antigenic peptides (20S-PA28 complex). The polypeptide is Proteasome subunit beta type-1 (Psmb1) (Rattus norvegicus (Rat)).